The chain runs to 642 residues: Threonine--tRNA ligase (642 aa).

A TGS domain is found at 1 to 61; the sequence is MPVITLPDGS…ETDAELSIIT (61 aa). The interval 243–534 is catalytic; the sequence is DHRKIGKQLD…LIEEYAGRFP (292 aa). C334, H385, and H511 together coordinate Zn(2+).

This sequence belongs to the class-II aminoacyl-tRNA synthetase family. Homodimer. Zn(2+) is required as a cofactor.

The protein resides in the cytoplasm. It catalyses the reaction tRNA(Thr) + L-threonine + ATP = L-threonyl-tRNA(Thr) + AMP + diphosphate + H(+). Its function is as follows. Catalyzes the attachment of threonine to tRNA(Thr) in a two-step reaction: L-threonine is first activated by ATP to form Thr-AMP and then transferred to the acceptor end of tRNA(Thr). Also edits incorrectly charged L-seryl-tRNA(Thr). The polypeptide is Threonine--tRNA ligase (Shewanella sp. (strain MR-7)).